Here is a 361-residue protein sequence, read N- to C-terminus: Trans-enoyl reductase gkaC (361 aa).

The Enoyl reductase (ER) domain maps to 15–357 (EDVGSFEISR…RREISGKKMV (343 aa)). NADP(+)-binding positions include 48 to 51 (CDWK), 172 to 175 (SSAS), 195 to 198 (SPKN), Tyr213, 260 to 261 (FE), and 351 to 352 (IS).

The protein belongs to the zinc-containing alcohol dehydrogenase family. As to quaternary structure, monomer.

It participates in mycotoxin biosynthesis. Functionally, trans-enoyl reductasee; part of the gene cluster that mediates the biosynthesis of GKK1032, fungal natural products containing a macrocyclic para-cyclophane connected to a decahydrofluorene ring system that show potent antitumor activities. Within the pathway, the PKS-NRPS gkaA, with the help of the trans-enoyl reductase gkaC, synthesize the polyketide-tyrosyl acyl thioester product which can be reductively off-loaded by the terminal reductase (R) domain in gkaA. The PKS module of gkaA acts in combination with the trans-acting enoyl reductase gkaC to produce a methylated polyketide attached to the ACP domain. In parallel, the adenylation (A) domain of the NRPS module activated L-tyrosine, which is then transferred to the ACP domain. The condensation (C) domain subsequently links this group to the polyketide chain, forming an enzyme-bound amide. The alpha/beta hydrolase gkaG is then required to catalyze the subsequent Knoevenagel condensation that affords the 3-pyrrolin-2-one ring, whereas the three proteins gkaB, gkadX and gkaZ then function synergistically to form the cyclophane. The polypeptide is Trans-enoyl reductase gkaC (Penicillium citrinum).